A 64-amino-acid chain; its full sequence is Short neurotoxin 1 (64 aa).

Intrachain disulfides connect Cys3–Cys26, Cys20–Cys43, Cys45–Cys56, and Cys57–Cys62.

Belongs to the three-finger toxin family. Short-chain subfamily. Type I alpha-neurotoxin sub-subfamily. As to expression, expressed by the venom gland.

It is found in the secreted. Functionally, binds to muscle nicotinic acetylcholine receptor (nAChR) and inhibit acetylcholine from binding to the receptor, thereby impairing neuromuscular transmission. The protein is Short neurotoxin 1 of Bungarus fasciatus (Banded krait).